A 606-amino-acid chain; its full sequence is NADH-ubiquinone oxidoreductase chain 5 (606 aa).

Helical transmembrane passes span 1–21, 35–55, 87–107, 114–134, 140–160, 171–191, 211–233, 241–261, 272–292, 301–320, 325–347, 366–386, 413–433, 457–477, 482–502, and 582–602; these read MNLFTSFTLLTLLILTTPIMM, YVKNIVFCAFITSLVPAMVYL, LMFMPVALFITWSIMEFSMWY, INQFFKYLLLFLITMLILVTA, LFIGWEGVGIMSFLLIGWWFG, AILYNRIGDIGLLASMAWFLS, FPLMGLVLAAAGKSAQFGLHPWL, TPVSALLHSSTMVVAGIFLLV, LIQTVTLCLGAITTLFTAICA, IIAFSTSSQLGLMMVTIGLN, AFLHICTHAFFKAMLFLCSGSII, LPFTTTALIIGCLALTGMPFL, LIATSLTAVYSTRIIFFALLG, LLVGSIFAGFILSNSIPPMTT, MPLHLKLTALAMTTLGFIIAF, and GLIKLYFLSFLITITLSMILF.

This sequence belongs to the complex I subunit 5 family. As to quaternary structure, core subunit of respiratory chain NADH dehydrogenase (Complex I) which is composed of 45 different subunits.

Its subcellular location is the mitochondrion inner membrane. It catalyses the reaction a ubiquinone + NADH + 5 H(+)(in) = a ubiquinol + NAD(+) + 4 H(+)(out). Core subunit of the mitochondrial membrane respiratory chain NADH dehydrogenase (Complex I) which catalyzes electron transfer from NADH through the respiratory chain, using ubiquinone as an electron acceptor. Essential for the catalytic activity and assembly of complex I. This is NADH-ubiquinone oxidoreductase chain 5 (MT-ND5) from Balaenoptera physalus (Fin whale).